The following is a 566-amino-acid chain: Arginine--tRNA ligase (566 aa).

Residues 121–131 carry the 'HIGH' region motif; that stretch reads ANPNGPFHIGH.

Belongs to the class-I aminoacyl-tRNA synthetase family.

It localises to the cytoplasm. The enzyme catalyses tRNA(Arg) + L-arginine + ATP = L-arginyl-tRNA(Arg) + AMP + diphosphate. The protein is Arginine--tRNA ligase of Methanococcus maripaludis (strain DSM 14266 / JCM 13030 / NBRC 101832 / S2 / LL).